Reading from the N-terminus, the 96-residue chain is Co-chaperonin GroES (96 aa).

Belongs to the GroES chaperonin family. As to quaternary structure, heptamer of 7 subunits arranged in a ring. Interacts with the chaperonin GroEL.

It is found in the cytoplasm. Together with the chaperonin GroEL, plays an essential role in assisting protein folding. The GroEL-GroES system forms a nano-cage that allows encapsulation of the non-native substrate proteins and provides a physical environment optimized to promote and accelerate protein folding. GroES binds to the apical surface of the GroEL ring, thereby capping the opening of the GroEL channel. This Hyphomonas neptunium (strain ATCC 15444) protein is Co-chaperonin GroES.